Reading from the N-terminus, the 403-residue chain is S-adenosylmethionine synthase (403 aa).

Histidine 15 contributes to the ATP binding site. Aspartate 17 contributes to the Mg(2+) binding site. Glutamate 43 lines the K(+) pocket. L-methionine is bound by residues glutamate 56 and glutamine 99. Positions glutamine 99–arginine 109 are flexible loop. ATP contacts are provided by residues aspartate 166 to lysine 168, lysine 232 to phenylalanine 233, aspartate 241, arginine 247 to lysine 248, alanine 264, and lysine 268. Aspartate 241 is a binding site for L-methionine. L-methionine is bound at residue lysine 272.

It belongs to the AdoMet synthase family. Homotetramer; dimer of dimers. Mg(2+) serves as cofactor. Requires K(+) as cofactor.

The protein localises to the cytoplasm. It carries out the reaction L-methionine + ATP + H2O = S-adenosyl-L-methionine + phosphate + diphosphate. It functions in the pathway amino-acid biosynthesis; S-adenosyl-L-methionine biosynthesis; S-adenosyl-L-methionine from L-methionine: step 1/1. Functionally, catalyzes the formation of S-adenosylmethionine (AdoMet) from methionine and ATP. The overall synthetic reaction is composed of two sequential steps, AdoMet formation and the subsequent tripolyphosphate hydrolysis which occurs prior to release of AdoMet from the enzyme. This chain is S-adenosylmethionine synthase, found in Stenotrophomonas maltophilia (strain R551-3).